Consider the following 171-residue polypeptide: Putative RING finger protein 027R (171 aa).

The RING-type zinc-finger motif lies at 121–163; it reads CAVCMTNPVWVDFVWSCKHISTCIKCLKMLSRGSNGFKCPICR.

It belongs to the IIV-6 157L family.

This is Putative RING finger protein 027R from Aedes vexans (Inland floodwater mosquito).